Here is a 3660-residue protein sequence, read N- to C-terminus: MSAHVLWYEEVEDDYEREDVQKKTFTKWINAQFAKCGRRCIEDLFNDFRDGRKLLELLECLTGQKIAKEKGSTRVHALNNVNKALQILQRNNVDLVNIGSSDIVDGNHKLTLGLIWNIILHWQVKDVMKNIMAGLQQTNSEKILLSWVRQSTRNYPQVNVINFTSSWSDGLAFNALLHSHRPDLFDWNAVASQQSPVQRLDHAFNIARQHLGIEKLLDPEDVATACPDKKSILMYVTSLFQVLPQQVTMEAIREVEMLPRHSRVTTEEHIQVHHQQHFSQEITVNIPQRPSPSPKPRFKSYAYAQTAYVIPPDQKRRQVPPQFLETVEKRTYTTTVMRSEMDLDSYQTALEEVLTWLLSAEDALQAQGDISSDVEVVKEQFHTHEGFMMELTAHQGRVGNVLQVGSQLLAMGKLSDDEENEIQEQMNLLNSRWESLRVASMEKQSNLHKILMDLQNQQLAQLADWLTKTEERTKKIDSEPLGPDLEDLKRQVEEHKAFQDDLEQEQVKVNSLTHMVVVVDENSGDKATAALEEQLQHFGSRWAAICRWTEDRWVLLQDILRKWQHFAEEQCLFDAWLTEKEGSLSKIQTSDFKDENEMLTSLRKLAILKGDIEMKKQMMSKLKSLSRDLLVAVKNKAVAQKLESRLENFAQRWDSLVQKLESDSKQVSQAVTTTQTSLTQTTVMETVTMVTTREQILVKHAKEELPPPPPHKKRQLLVDSEIRKRFDSDTTELHSWMTRSEAVLQSPEFAIYRKEGNLSDLRERVNAIQREKPEKYRKLQDASRSAEALVEQMVNEGLNADNIRQASEQLKSRWIEFCQLLSERLVWLEYQNSIIDFYSQLQRLEQTAITAENWLKAQPTPATDPATVKIQLEKCKDEIIRMSTLQPQIERLKAQSQALKEKEQCPVFLDADLAAFTSHFKQILADMHTREKQLQTIFDSLPPARYKDTVTTILSWIQQSETKVSIPPVAVAEYEIMEQRLGELKALQSSLQEQQKGLKYLNTTVEDLSRKAPAEVSQKYRSEVELIVGRWKKLSSQLVEHCQKLEDLMTKLQRFQNDTKTLKKWMAEVDVFLKEEWPALGDSEALEKQLEQCTALVNDIQTIQPSLNSVNEIGKKMKREAEPEFASRIATELKDLNAQWEHICQQAHAKKAALKGGLDKTVSLRKDLSEMHEWITQAEEEYLERDFEYKTPEELQKAVEELKRAKEDAMQKEVKVKLITDSVNNFIAKAPPAANEALKKELDVLITSYQRLCSRLNGKCKTLEEVWACWHELLSYLDAENKWLNEVELKLKATENIQGGAEEISESLDSLERLMRHPEDNRNQIRELAQTLTDGGILDELINEKLEKFNTRWEELQQEAVRRQKSLEQSIQSAQETDKTLRLIQESLAAIDKQLTAYTADRVDAAQVPQEAQKIQSELTSHEISLEEMKKRNRGKESAKRVLSQIDVAQKKLQDVSMKFRLFQKPANFEQRLQECKRILDEVKLQVPKLETKSVEQEVVQSHLDHCMKLYKSLSEVKSEVETVIKTGRQIVQKQQTENPKELDERLTALKLQYNELGAKVTEKKQELEKCLKLSRKLRKEINSLTEWLAATDVELTKRSAVQGMPSNLDAEIAWGKATRKEIEKRQVQLKNICDLGENLKTVLKGKESLVEDKLSLLNSNWIAVTSRAEEWLNLLMEYQKHMEAFDQKVANVTTWIYRAEILLDESDKQKPQQKEETLKRLKAELNDMHPKVDSVRDQAVDLMTNRGDHCRKVIEPKLSELNHRFAAISQRIKSGKPFIPLKELEQFDFDIQKLLEPLEVEIQQGVNLKEEDFNKDMSEDDESTVKELLQRGDTLQKRITDERKREEIKIKQQLLQTKHNALKDLRSQRRKKALEISHQWYQYKRQADDLMTWLDDIEKKLASLPDHKDEQKLKEIGGELEKKKEDLNAVNRQAERLSKDGAAKAVEPTLVQLSKRWRDFESKFAQFRRLNYAQIQTVLEDTTFVMTESMTVETTYVPSTYLAEILQLLQALSEVEERLNSPVLQAKDCEDLLKQEECLKNIKDCLGRLQGHIDIIHSKKTPALQSATPRETANIQDKLTQLNSQWEKVNKMYRDRQARFDKSKEKWRLFHCEMKSFNEWLTETEEKLSRAQIEAGDVGHVKTKQFLQELQDGIGRQQTVVKTLNVTGEEIIEQSSAADANVLKEQLGNLNTRWQEICRQLVEKRKRIEEEKNILSEFQEDLNKLILWLEETENVIAIPLEPGNEDQLRDCLGKVKLRVEELLPHKGILKRLNETGGTTLGSASLNPERKHKLESTLKEASRRLLKVSRDLPEKQKEIEILLKDFIELNQQINQLTLWITPVKNQLELYNQVGQPGAFDIKETEAAVQAKQPNVEEVLSKGCHLYKEKPATHPVKKKLEDLNADWKAINHLILQLKEKPTFGEPALTSPGVLTSGQTVAVDTQARVTKETTSFTPEMPSSVLLEVPALADFNKAWAELTDWLSRLDREIKAQRVTVGDLDDINDMIIKQKANMQDLEQRRPQLDELITAAQNLKNKTSNQEARTIITDRIEKIQSQWDDVHGYLQNRRQQLHEMQKDSTQWLEAKQEAEQVLEQAKAKLESWKEISYTVEALKKQNSELKQFSKEIRQWQMNIEGVNDVALKPVRDYSADDTRKVELMTDNINATWATINKRVSEREAALESALLMLQEFYLDLEKFLAWLTEAETTANVLQDATHKEKTLEDPQMVRELMKQWQDLQAEIDAHTDIFHNLDENGQKILRSLEGSEDAVLLQRRLDNMNFRWSELRKKSLNIRSHLEASTDQWKRLHLSLQELLAWLQLKEDELKQQAPIGGDIPTVQKQNDVHRTFKRELKTKEPVIMNALETVRLFLADQPVEGLEKVYPEPRDLSPEERAQNVTKVLRRQADDVRTEWDKLNLRSADWQKKIDDALERLQGLQEAMDELDLKLRQAEAFKGSWQPVGDLLIDSLQDHLEKVKVYRAEMVPLKEKVHQVNELAHRFAPPDIQLSPYTLSCLEDLNTRWKVLQVAIDERIRQLHEAHRDFGPTSQHFLTTSVQGPWERAISPNKVPYYINHETQTTCWDHPKMTELYQSLADLNNVRFSAYRTAMKLRRLQKALCLDLLNLSAACDALDQHNLKQNDQPMDILQIINCLTTIYDRLEQEHNNLVNVPLCVDMCLNWLLNVYDTGRTGRIRVLSFKTGVVSLCKAHLEDKYRYLFKQVASSTGFCDQRRLGLLLHDSIQIPRQLGEVASFGGSNIEPSVRSCFQFANNKPEIEAALFLDWMRLEPQSMVWLPVLHRVAAAETAKHQAKCNICKECPIIGFRYRSLKHFNYDICQSCFFSGRVAKGHKMHYPMVEYCTPTTSGEDVRDFAKVLKNKFRTKRYFAKHPRMGYLPVQTVLEGDNMETPVTLINFWPVDSALAEMENSNGSYLNDSISPNESIDDEHLLIQHYCQSLNQESPLSQPRSPAQILISLESEERGELERILADLEEENRNLQAEYDRLKQQHDHKGLSPLPSPPEMMPVSPQSPRDAELIAEAKLLRQHKGRLEARMQILEDHNKQLESQLHRLRQLLEQPQADAKVNGTTLSSPSTSLQRSDSSQPMLLRVVGSQTSETMGEDDLLSPPQDTSTGLEEVMEQLNNSFPSSRGRNAPGKPVREATM.

Positions 1 to 244 (MSAHVLWYEE…YVTSLFQVLP (244 aa)) are actin-binding. Calponin-homology (CH) domains are found at residues 19-123 (DVQK…LHWQ) and 138-244 (TNSE…QVLP). Spectrin repeat units lie at residues 341-449 (MDLD…NLHK), 450-558 (ILMD…LLQD), 561-669 (RKWQ…QVSQ), 721-830 (EIRK…WLEY), 832-936 (NSII…QLQT), 945-1047 (RYKD…KLED), 1050-1156 (TKLQ…ALKG), 1159-1265 (DKTV…TLEE), 1268-1369 (ACWH…SLEQ), 1470-1570 (EQRL…ELEK), 1573-1678 (KLSR…LLME), 1681-1782 (KHME…FIPL), 1879-1981 (HQWY…TVLE), 2013-2103 (LSEV…RFDK), 2106-2211 (EKWR…RIEE), 2214-2321 (NILS…EIEI), 2472-2574 (FNKA…QLHE), 2577-2683 (KDST…ALES), 2686-2799 (LMLQ…HLEA), 2802-2904 (DQWK…LRRQ), 2906-2928 (DDVR…KIDD), and 2931-3037 (ERLQ…QLHE). Positions 3052–3085 (TSVQGPWERAISPNKVPYYINHETQTTCWDHPKM) constitute a WW domain. The ZZ-type; degenerate zinc finger occupies 3305-3361 (KHQAKCNICKECPIIGFRYRSLKHFNYDICQSCFFSGRVAKGHKMHYPMVEYCTPTT). Positions 3310, 3313, 3334, and 3337 each coordinate Zn(2+). Disordered regions lie at residues 3503–3526 (KQQH…VSPQ) and 3575–3660 (PQAD…EATM). Composition is skewed to polar residues over residues 3582-3601 (NGTT…SSQP) and 3637-3647 (QLNNSFPSSRG).

Its subcellular location is the cell membrane. It is found in the sarcolemma. It localises to the cytoplasm. The protein localises to the cytoskeleton. The protein resides in the postsynaptic cell membrane. In terms of biological role, may play a role in anchoring the cytoskeleton to the plasma membrane. The chain is Dystrophin (DMD) from Gallus gallus (Chicken).